The sequence spans 261 residues: Indole-3-glycerol phosphate synthase (261 aa).

It belongs to the TrpC family.

The catalysed reaction is 1-(2-carboxyphenylamino)-1-deoxy-D-ribulose 5-phosphate + H(+) = (1S,2R)-1-C-(indol-3-yl)glycerol 3-phosphate + CO2 + H2O. The protein operates within amino-acid biosynthesis; L-tryptophan biosynthesis; L-tryptophan from chorismate: step 4/5. The protein is Indole-3-glycerol phosphate synthase of Paraburkholderia phytofirmans (strain DSM 17436 / LMG 22146 / PsJN) (Burkholderia phytofirmans).